Here is a 275-residue protein sequence, read N- to C-terminus: Thioredoxin-like 1-1, chloroplastic (275 aa).

A chloroplast-targeting transit peptide spans 1-72; the sequence is MTEVISKTSL…GDSQDESFRR (72 aa). Residues 73 to 206 form the Thioredoxin domain; sequence SSAITAQTTL…FRDALAKHGP (134 aa). Active-site nucleophile residues include C129 and C132. An intrachain disulfide couples C129 to C132. Residues 238 to 275 are disordered; it reads KPVPVEKEAATPDSNPSLPVPLPSMSSNDEKTLVSAGR. Over residues 249–264 the composition is skewed to low complexity; the sequence is PDSNPSLPVPLPSMSS.

It belongs to the thioredoxin family.

It localises to the plastid. The protein resides in the chloroplast. Thiol-disulfide oxidoreductase that may participate in various redox reactions. Possesses insulin disulfide bonds reducing activity. This Arabidopsis thaliana (Mouse-ear cress) protein is Thioredoxin-like 1-1, chloroplastic.